The chain runs to 225 residues: Urease subunit alpha (225 aa).

The urease gamma stretch occupies residues 1–102 (MRLTPKELDK…LVTIHNPIED (102 aa)). The segment at 103 to 225 (NGKLTPGEYI…ANAAQKHFIH (123 aa)) is urease beta.

The protein in the N-terminal section; belongs to the urease gamma subunit family. This sequence in the C-terminal section; belongs to the urease beta subunit family. Heterohexamer of 3 UreA (alpha) and 3 UreB (beta) subunits.

It is found in the cytoplasm. The enzyme catalyses urea + 2 H2O + H(+) = hydrogencarbonate + 2 NH4(+). It functions in the pathway nitrogen metabolism; urea degradation; CO(2) and NH(3) from urea (urease route): step 1/1. This chain is Urease subunit alpha, found in Helicobacter hepaticus (strain ATCC 51449 / 3B1).